We begin with the raw amino-acid sequence, 134 residues long: Small ribosomal subunit protein uS11 (134 aa).

This sequence belongs to the universal ribosomal protein uS11 family. In terms of assembly, part of the 30S ribosomal subunit. Interacts with proteins S7 and S18. Binds to IF-3.

Functionally, located on the platform of the 30S subunit, it bridges several disparate RNA helices of the 16S rRNA. Forms part of the Shine-Dalgarno cleft in the 70S ribosome. This chain is Small ribosomal subunit protein uS11, found in Polaromonas sp. (strain JS666 / ATCC BAA-500).